A 532-amino-acid polypeptide reads, in one-letter code: Spore germination protein 270-11 (532 aa).

Disordered regions lie at residues 113–225 and 328–436; these read TTTS…GYGS and LSPT…TTGT. Positions 329–426 are enriched in low complexity; that stretch reads SPTCSDSSSP…GSGSSSETQP (98 aa). Tandem repeats lie at residues 339–342, 343–346, 347–350, 351–354, 355–358, 359–362, 363–366, 367–370, 371–374, 375–378, 397–400, 401–404, and 405–408. The tract at residues 339 to 378 is 10 X 4 AA tandem repeats of T-[EP]-T-[EP]; it reads TPTPTETPTETPTETPTETPTETPTETPTETPTETETPTP. Residues 397–408 form a 3 X 4 AA tandem repeats of T-[EP]-T-[PD] region; that stretch reads TPTPTETDTPTP.

The protein is Spore germination protein 270-11 (celB) of Dictyostelium discoideum (Social amoeba).